We begin with the raw amino-acid sequence, 179 residues long: Plasmid-derived single-stranded DNA-binding protein (179 aa).

Residues 6-110 form the SSB domain; sequence INKVILVGRL…ILVKTTGTMQ (105 aa). A DNA-binding region spans residues 55–61; that stretch reads WHRVVLF. The interval 117 to 179 is disordered; that stretch reads GAQTQPEEGQ…DYGFSDDIPF (63 aa). Residues 118-132 show a composition bias toward polar residues; the sequence is AQTQPEEGQQFSGQP. Over residues 145–155 the composition is skewed to basic residues; sequence GGAKTKGRGRK. The span at 167–179 shows a compositional bias: acidic residues; the sequence is EGDDYGFSDDIPF.

Homotetramer.

Functionally, may contribute to the conjugative processing of DNA. It has a functional relationship with Psi (plasmid-mediated sos inhibition) proteins. The protein is Plasmid-derived single-stranded DNA-binding protein (ssbF) of Escherichia coli (strain K12).